Reading from the N-terminus, the 138-residue chain is Basic phospholipase A2 PL-X' (138 aa).

A signal peptide spans 1-16 (MRTLWIMAVLLVGVEG). Cystine bridges form between Cys42–Cys131, Cys44–Cys60, Cys59–Cys111, Cys65–Cys138, Cys66–Cys104, Cys73–Cys97, and Cys91–Cys102. Ca(2+)-binding residues include Tyr43, Gly45, and Gly47. His63 is an active-site residue. Asp64 lines the Ca(2+) pocket. The active site involves Asp105.

Belongs to the phospholipase A2 family. Group II subfamily. D49 sub-subfamily. The cofactor is Ca(2+). In terms of tissue distribution, expressed by the venom gland.

The protein localises to the secreted. The enzyme catalyses a 1,2-diacyl-sn-glycero-3-phosphocholine + H2O = a 1-acyl-sn-glycero-3-phosphocholine + a fatty acid + H(+). Functionally, PLA2 catalyzes the calcium-dependent hydrolysis of the 2-acyl groups in 3-sn-phosphoglycerides. The protein is Basic phospholipase A2 PL-X' of Protobothrops flavoviridis (Habu).